We begin with the raw amino-acid sequence, 284 residues long: GPN-loop GTPase 3 (284 aa).

13–18 (GSGKST) provides a ligand contact to GTP. Positions 72–74 (GPN) match the Gly-Pro-Asn (GPN)-loop; involved in dimer interface motif. A GTP-binding site is contributed by 174-177 (TKMD).

Belongs to the GPN-loop GTPase family. As to quaternary structure, heterodimer with GPN1. Binds to RNA polymerase II (RNAPII). Interacts directly with subunits RPB4 and RPB7 and the CTD of RPB1.

Small GTPase required for proper localization of RNA polymerase II (RNAPII). May act at an RNAP assembly step prior to nuclear import. The protein is GPN-loop GTPase 3 of Homo sapiens (Human).